We begin with the raw amino-acid sequence, 217 residues long: uncharacterized protein (217 aa).

The span at 59 to 76 shows a compositional bias: polar residues; that stretch reads AQSTIQRTSSLPVPSSSN. Disordered stretches follow at residues 59–105 and 124–217; these read AQST…ETAN and KKSL…HISK. The residue at position 68 (serine 68) is a Phosphoserine. Threonine 92 is subject to Phosphothreonine. The span at 124-135 shows a compositional bias: basic and acidic residues; the sequence is KKSLERRVREEQ. The segment covering 136 to 147 has biased composition (acidic residues); that stretch reads EEKTDNEDDNDV. Over residues 148 to 157 the composition is skewed to polar residues; it reads EISTQESLEN. A compositionally biased stretch (acidic residues) spans 173–188; it reads LEDDIEGQEFSFDDQD. A compositionally biased stretch (polar residues) spans 199-217; sequence WLSSQKQQGSPLTSDHISK.

This is an uncharacterized protein from Schizosaccharomyces pombe (strain 972 / ATCC 24843) (Fission yeast).